The primary structure comprises 445 residues: UPF0210 protein SP_0239 (445 aa).

This sequence belongs to the UPF0210 family. Homodimer.

The chain is UPF0210 protein SP_0239 from Streptococcus pneumoniae serotype 4 (strain ATCC BAA-334 / TIGR4).